A 77-amino-acid polypeptide reads, in one-letter code: Small ribosomal subunit protein uS17c (77 aa).

This sequence belongs to the universal ribosomal protein uS17 family. As to quaternary structure, part of the 30S ribosomal subunit.

The protein resides in the plastid. It localises to the chloroplast. In terms of biological role, one of the primary rRNA binding proteins, it binds specifically to the 5'-end of 16S ribosomal RNA. In Cyanidium caldarium (Red alga), this protein is Small ribosomal subunit protein uS17c (rps17).